Reading from the N-terminus, the 264-residue chain is MAPTRRSRDLLRGKNVLIIGGTSGIGFAVAQLVIEHGAMACIAGSNPTKLGKALDALKQHPDRDPIAIVQSATCDLFDVPNLEQNLDNLLKLAAGDSKIHHIVFTAADMVQPPPLASVTIEQIQRVGTIRFTAPMLVAKLLPKYMELCPENSYTLTSGSHAKQPDPGWSLVTGYCGGVEGLMRGLAVDMMPLRVNVVSPGAVLTPVLRDILGDSLEIALDAARKKSTTGRIARPEDVAEAYLYIMKDQNITGTVLETSAGMLLR.

A helical transmembrane segment spans residues 13-35 (GKNVLIIGGTSGIGFAVAQLVIE). NADP(+) is bound by residues Thr22, Ser23, Ile25, Ser45, Asn46, Lys49, Asp75, Asn88, Arg130, Val202, and Thr204. A glycan (N-linked (GlcNAc...) asparagine) is linked at Asn249.

It belongs to the short-chain dehydrogenases/reductases (SDR) family.

Its subcellular location is the membrane. It carries out the reaction 1-hydroxy-3-{[2-(1,1-dimethylallyl)-indol-3-yl]methyl}-6H,7H,8H-5lambda(5)-pyrrolo[1,2-a]pyrazine + NADPH + H(+) = 1-hydroxy-3-{[2-(1,1-dimethylallyl)-indol-3-yl]methyl}-4H,6H,7H,8H-pyrrolo[1,2-a]pyrazine + NADP(+). The enzyme catalyses 1-hydroxy-3-{[2-(1,1-dimethylallyl)-indol-3-yl]methyl}-4H,6H,7H,8H-pyrrolo[1,2-a]pyrazine = (+)-premalbrancheamide. Its pathway is alkaloid biosynthesis. Short-chain dehydrogenase/reductase; part of the gene cluster that mediates the biosynthesis of malbrancheamide, a dichlorinated fungal indole alkaloid that belongs to a family of natural products containing a characteristic bicyclo[2.2.2]diazaoctane core. The first step of malbrancheamide biosynthesis involves coupling of L-proline and L-tryptophan by malG, a bimodular NRPS, to produce L-Pro-L-Trp aldehyde through reductive offloading. This compound undergoes spontaneous cyclization and dehydration to give a dienamine which is reverse prenylated at C-2 by malE. The other prenyltransferase present in the cluster, malB, displays modest activity, suggesting that may be a redundant gene in the pathway. Subsequently, a [4+2] Diels-Alder cyclo-addition catalyzed by the bifunctional enzyme malC forms the characteristic bicyclo[2.2.2]diazaoctane ring of premalbrancheamid. The first reaction catalyzed is a NADPH-dependent reduction reaction in which the nicotinamide cofactor is a stoichiometric reagent. Either NADH or NADPH is effective as a cofactor. NADP(+) is required for stereocontrolled formation of premalbrancheamide, however it does not appear to be required as a formal stoichiometric reagent because the second reaction performed by malC, the [4+2] cycloaddition, is a balanced chemical reaction without requirement for hydride transfer to balance the reaction. Finally, the flavin-dependent halogenase malA catalyzes the iterative dichlorination of the indole ring of premalbrancheamide to yield C-9 monochlorinated malbrancheamide B, C-8 monochlorinated isomalbrancheamide B, and dichlorinated malbrancheamide. MalA is also able to brominate premalbrancheamide at C-9 to yield malbrancheamide C, and, to a lesser extend, at C-8 to yield isomalbrancheamide C. Finally, malA can brominate C-9 monochlorinated malbrancheamide B at C-8 to yield malbrancheamide D, or C-8 monochlorinated isomalbrancheamide B at C-9 to produce isomalbrancheamide D. This Malbranchea aurantiaca protein is Short-chain dehydrogenase/reductase malC.